The chain runs to 98 residues: Cystatin-A (98 aa).

Met1 is modified (N-acetylmethionine). The short motif at 46-50 (QVVAG) is the Secondary area of contact element.

It belongs to the cystatin family.

It localises to the cytoplasm. Its function is as follows. This is an intracellular thiol proteinase inhibitor. This is Cystatin-A (CSTA) from Felis catus (Cat).